The primary structure comprises 191 residues: Calcium-activated potassium channel subunit beta-1 (191 aa).

At G2–C18 the chain is on the cytoplasmic side. A helical membrane pass occupies residues L19–L39. Topologically, residues P40–L157 are extracellular. N-linked (GlcNAc...) asparagine glycans are attached at residues N80 and N142. A helical transmembrane segment spans residues L158–V178. Residues K179 to R191 are Cytoplasmic-facing.

Belongs to the KCNMB (TC 8.A.14.1) family. KCNMB1 subfamily. In terms of assembly, interacts with KCNMA1 tetramer. There are probably 4 molecules of KCMNB1 per KCNMA1 tetramer. In terms of processing, N-glycosylated.

Its subcellular location is the membrane. Functionally, regulatory subunit of the calcium activated potassium KCNMA1 (maxiK) channel. Modulates the calcium sensitivity and gating kinetics of KCNMA1, thereby contributing to KCNMA1 channel diversity. Increases the apparent Ca(2+)/voltage sensitivity of the KCNMA1 channel. It also modifies KCNMA1 channel kinetics and alters its pharmacological properties. It slows down the activation and the deactivation kinetics of the channel. Acts as a negative regulator of smooth muscle contraction by enhancing the calcium sensitivity to KCNMA1. Its presence is also a requirement for internal binding of the KCNMA1 channel opener dehydrosoyasaponin I (DHS-1) triterpene glycoside and for external binding of the agonist hormone 17-beta-estradiol (E2). Increases the binding activity of charybdotoxin (CTX) toxin to KCNMA1 peptide blocker by increasing the CTX association rate and decreasing the dissociation rate. The sequence is that of Calcium-activated potassium channel subunit beta-1 (KCNMB1) from Bos taurus (Bovine).